Reading from the N-terminus, the 86-residue chain is Gas vesicle protein M (86 aa).

Belongs to the gas vesicle GvpA family. In terms of assembly, gvpF to GvpM interact with each other in vitro, and may form multi-subunit complex(es). Might interact with GvpA.

It is found in the gas vesicle. In terms of biological role, proteins GvpF to GvpM might be involved in nucleating gas vesicle formation. A minor component of the gas vesicle. Gas vesicles are small, hollow, gas filled protein structures found in some microorganisms. They allow positioning of halobacteria at the optimal depth for growth in the poorly aerated, shallow brine pools of their habitat. Expression of a 9.5 kb mc-vac DNA fragment containing 2 divergently transcribed regions (gvpD-gvpE-gvpF-gvpG-gvpH-gvpI-gvpJ-gvpK-gvpL-gvpM and gvpA-gvpC-gvpN-gvpO) allows H.volcanii to produce gas vesicles. This chain is Gas vesicle protein M, found in Haloferax mediterranei (strain ATCC 33500 / DSM 1411 / JCM 8866 / NBRC 14739 / NCIMB 2177 / R-4) (Halobacterium mediterranei).